The sequence spans 466 residues: UDP-N-acetylmuramate--L-alanine ligase (466 aa).

114 to 120 (GTHGKTT) serves as a coordination point for ATP.

It belongs to the MurCDEF family.

The protein resides in the cytoplasm. The enzyme catalyses UDP-N-acetyl-alpha-D-muramate + L-alanine + ATP = UDP-N-acetyl-alpha-D-muramoyl-L-alanine + ADP + phosphate + H(+). It functions in the pathway cell wall biogenesis; peptidoglycan biosynthesis. Its function is as follows. Cell wall formation. This chain is UDP-N-acetylmuramate--L-alanine ligase, found in Mesorhizobium japonicum (strain LMG 29417 / CECT 9101 / MAFF 303099) (Mesorhizobium loti (strain MAFF 303099)).